The primary structure comprises 347 residues: Hydroxymethylglutaryl-CoA synthase (347 aa).

The (3S)-3-hydroxy-3-methylglutaryl-CoA site is built by D29 and A30. E80 (proton donor/acceptor) is an active-site residue. (3S)-3-hydroxy-3-methylglutaryl-CoA is bound by residues C112 and T153. Catalysis depends on C112, which acts as the Acyl-thioester intermediate. CoA is bound at residue R199. Residues T201 and H234 each contribute to the (3S)-3-hydroxy-3-methylglutaryl-CoA site. H234 serves as the catalytic Proton donor/acceptor. CoA is bound at residue K239. Residues R243, N266, and S296 each coordinate (3S)-3-hydroxy-3-methylglutaryl-CoA.

This sequence belongs to the thiolase-like superfamily. Archaeal HMG-CoA synthase family. Interacts with acetoacetyl-CoA thiolase that catalyzes the precedent step in the pathway and with a DUF35 protein. The acetoacetyl-CoA thiolase/HMG-CoA synthase complex channels the intermediate via a fused CoA-binding site, which allows for efficient coupling of the endergonic thiolase reaction with the exergonic HMGCS reaction.

It carries out the reaction acetoacetyl-CoA + acetyl-CoA + H2O = (3S)-3-hydroxy-3-methylglutaryl-CoA + CoA + H(+). Its pathway is metabolic intermediate biosynthesis; (R)-mevalonate biosynthesis; (R)-mevalonate from acetyl-CoA: step 2/3. Catalyzes the condensation of acetyl-CoA with acetoacetyl-CoA to form 3-hydroxy-3-methylglutaryl-CoA (HMG-CoA). Functions in the mevalonate (MVA) pathway leading to isopentenyl diphosphate (IPP), a key precursor for the biosynthesis of isoprenoid compounds that are building blocks of archaeal membrane lipids. The chain is Hydroxymethylglutaryl-CoA synthase from Methanocella arvoryzae (strain DSM 22066 / NBRC 105507 / MRE50).